Consider the following 618-residue polypeptide: Protease 4 (618 aa).

Topologically, residues 1 to 24 (MRTLWRFIAGFFKWTWRVLNFVRE) are cytoplasmic. A helical transmembrane segment spans residues 25–45 (MVLNLFFIFLVLVGVGIWMQI). Topologically, residues 46-618 (GNGSNSEQTA…AFCLTCANVR (573 aa)) are periplasmic. Lys209 functions as the Proton donor/acceptor in the catalytic mechanism. Ser409 acts as the Nucleophile in catalysis.

It belongs to the peptidase S49 family. In terms of assembly, homotetramer.

The protein localises to the cell inner membrane. Digests cleaved signal peptides in vitro, its in vivo function is unknown. This activity is necessary to maintain proper secretion of mature proteins across the membrane. This chain is Protease 4 (sppA), found in Salmonella typhi.